Consider the following 723-residue polypeptide: 1,3-beta-galactosyl-N-acetylhexosamine phosphorylase Cphy0577 (723 aa).

Aspartate 317 acts as the Proton donor in catalysis.

Belongs to the glycoside hydrolase 112 family.

The catalysed reaction is beta-D-galactosyl-(1-&gt;3)-N-acetyl-D-glucosamine + phosphate = alpha-D-galactose 1-phosphate + N-acetyl-D-glucosamine. Reversibly phosphorolyzes beta-D-galactopyranosyl-(1-&gt;3)-N-acetyl-D-glucosamine to form alpha-D-galactopyranose 1-phosphate and acetyl-D-glucosamine. Active towards galacto-N-biose and lacto-N-biose. Does not phosphorolyze galacto-N-tetraose or lacto-N-tetraose. In the reverse reaction has activity toward N-acetyl-D-glucosamine and N-acetyl-D-galactosamine, but not L-rhamnose, D-glucose or D-galactose. This is 1,3-beta-galactosyl-N-acetylhexosamine phosphorylase Cphy0577 from Lachnoclostridium phytofermentans (strain ATCC 700394 / DSM 18823 / ISDg) (Clostridium phytofermentans).